The primary structure comprises 203 residues: Small ribosomal subunit protein uS4 (203 aa).

Residues arginine 93–valine 156 form the S4 RNA-binding domain.

It belongs to the universal ribosomal protein uS4 family. In terms of assembly, part of the 30S ribosomal subunit. Contacts protein S5. The interaction surface between S4 and S5 is involved in control of translational fidelity.

Functionally, one of the primary rRNA binding proteins, it binds directly to 16S rRNA where it nucleates assembly of the body of the 30S subunit. In terms of biological role, with S5 and S12 plays an important role in translational accuracy. This chain is Small ribosomal subunit protein uS4, found in Streptococcus pyogenes serotype M4 (strain MGAS10750).